Reading from the N-terminus, the 317-residue chain is Tumor necrosis factor ligand superfamily member 11 (317 aa).

The span at 1–16 (MRRASRDYTKYLRGSE) shows a compositional bias: basic and acidic residues. Residues 1–43 (MRRASRDYTKYLRGSEEMGGGPGAPHEGPLHAPPPPAPHQPPA) form a disordered region. Residues 1–47 (MRRASRDYTKYLRGSEEMGGGPGAPHEGPLHAPPPPAPHQPPAASRS) are Cytoplasmic-facing. Over residues 31–41 (HAPPPPAPHQP) the composition is skewed to pro residues. Residues 48–68 (MFVALLGLGLGQVVCSVALFF) form a helical; Signal-anchor for type II membrane protein membrane-spanning segment. Over 69–317 (YFRAQMDPNR…FGAFKVRDID (249 aa)) the chain is Extracellular. Positions 164–313 (PFAHLTINAT…DATYFGAFKV (150 aa)) constitute a THD domain. N-linked (GlcNAc...) asparagine glycosylation is found at asparagine 171 and asparagine 198.

Belongs to the tumor necrosis factor family. In terms of assembly, homotrimer. Interacts with TNFRSF11B. Interacts with TNFRSF11A. Interacts with FBN1 (via N-terminal domain) in a Ca(+2)-dependent manner. Interacts with TNFAIP6 (via both Link and CUB domains). In terms of processing, the soluble form of isoform 1 derives from the membrane form by proteolytic processing. The cleavage may be catalyzed by ADAM17. Highest in the peripheral lymph nodes, weak in spleen, peripheral blood Leukocytes, bone marrow, heart, placenta, skeletal muscle, stomach and thyroid.

It is found in the cell membrane. The protein resides in the cytoplasm. Its subcellular location is the secreted. Cytokine that binds to TNFRSF11B/OPG and to TNFRSF11A/RANK. Osteoclast differentiation and activation factor. Augments the ability of dendritic cells to stimulate naive T-cell proliferation. May be an important regulator of interactions between T-cells and dendritic cells and may play a role in the regulation of the T-cell-dependent immune response. May also play an important role in enhanced bone-resorption in humoral hypercalcemia of malignancy. Induces osteoclastogenesis by activating multiple signaling pathways in osteoclast precursor cells, chief among which is induction of long lasting oscillations in the intracellular concentration of Ca (2+) resulting in the activation of NFATC1, which translocates to the nucleus and induces osteoclast-specific gene transcription to allow differentiation of osteoclasts. During osteoclast differentiation, in a TMEM64 and ATP2A2-dependent manner induces activation of CREB1 and mitochondrial ROS generation necessary for proper osteoclast generation. The protein is Tumor necrosis factor ligand superfamily member 11 (TNFSF11) of Homo sapiens (Human).